The chain runs to 483 residues: Isocitrate dehydrogenase [NADP] (483 aa).

Thr74 contacts NADP(+). Positions 83, 85, 89, 99, and 121 each coordinate D-threo-isocitrate. Asp232 serves as a coordination point for Mg(2+). NADP(+) contacts are provided by residues 264 to 270 and Asn277; that span reads HGSAPDI.

This sequence belongs to the isocitrate and isopropylmalate dehydrogenases family. As to quaternary structure, homodimer. Requires Mg(2+) as cofactor. The cofactor is Mn(2+).

It carries out the reaction D-threo-isocitrate + NADP(+) = 2-oxoglutarate + CO2 + NADPH. Functionally, catalyzes the oxidative decarboxylation of isocitrate to 2-oxoglutarate and carbon dioxide with the concomitant reduction of NADP(+). The chain is Isocitrate dehydrogenase [NADP] (icd) from Rickettsia felis (strain ATCC VR-1525 / URRWXCal2) (Rickettsia azadi).